We begin with the raw amino-acid sequence, 200 residues long: ASI1-immunoprecipitated protein 1 (200 aa).

Residues 18-101 (RTVYVDELTP…RPVRACAAEP (84 aa)) form the RRM domain.

As to quaternary structure, component of the ASI1-AIPP1-EDM2 (AAE) RNA regulatory complex composed of at least AIPP1/EDM3, ASI1 and EDM2 and may contain CPL2, AIPP2 and AIPP3/BDT1. Binds directly to ASI1 and EDM2 and may function as a bridge protein between them. Co-associates with EDM2 to histone H3 lysine 9 dimethylation (H3K9me2)-marked chromatin and transcripts at a critical proximal polyadenylation site of RPP7 to hamper proximal transcript polyadeylation/termination.

Its subcellular location is the nucleus. Its function is as follows. Prevents gene silencing by suppressing CHG methylation as well as histone H3 lysine 9 dimethylation (H3K9me2) status at target loci. Collaboratively with ASI1 and EDM2, the AAE complex regulates alternative RNA processing (e.g. alternative splicing) and epigenetic silencing (e.g. H3K9me2) of intronic heterochromatin-containing genes as well as genic heterochromatin-containing genes by promoting distal 3' polyadenylation, thus being required for the accumulation of their full-length transcripts. May also modulate transposable elements (TE) expression. Mediates RPP7-dependent race-specific disease resistance by promoting histone H3 lysine 9 dimethylation (H3K9me2) at the proximal RPP7 polyadenylation site, thus controlling alternative polyadenylation of RPP7 immune receptor transcripts and facilitating 2-phosphoserine RNAPII occupancy. In cv. Columbia, required for RPP7-dependent disease resistance against the Hyaloperonospora arabidopsidis isolate Hiks1. The protein is ASI1-immunoprecipitated protein 1 of Arabidopsis thaliana (Mouse-ear cress).